Here is a 502-residue protein sequence, read N- to C-terminus: Probable glycine dehydrogenase (decarboxylating) subunit 2 (502 aa).

The residue at position 273 (K273) is an N6-(pyridoxal phosphate)lysine.

Belongs to the GcvP family. C-terminal subunit subfamily. As to quaternary structure, the glycine cleavage system is composed of four proteins: P, T, L and H. In this organism, the P 'protein' is a heterodimer of two subunits. Pyridoxal 5'-phosphate serves as cofactor.

The enzyme catalyses N(6)-[(R)-lipoyl]-L-lysyl-[glycine-cleavage complex H protein] + glycine + H(+) = N(6)-[(R)-S(8)-aminomethyldihydrolipoyl]-L-lysyl-[glycine-cleavage complex H protein] + CO2. Its function is as follows. The glycine cleavage system catalyzes the degradation of glycine. The P protein binds the alpha-amino group of glycine through its pyridoxal phosphate cofactor; CO(2) is released and the remaining methylamine moiety is then transferred to the lipoamide cofactor of the H protein. The chain is Probable glycine dehydrogenase (decarboxylating) subunit 2 from Pyrococcus horikoshii (strain ATCC 700860 / DSM 12428 / JCM 9974 / NBRC 100139 / OT-3).